The primary structure comprises 196 residues: FMN-dependent NADH:quinone oxidoreductase (196 aa).

FMN is bound at residue S10.

Belongs to the azoreductase type 1 family. Homodimer. FMN is required as a cofactor.

The enzyme catalyses 2 a quinone + NADH + H(+) = 2 a 1,4-benzosemiquinone + NAD(+). The catalysed reaction is N,N-dimethyl-1,4-phenylenediamine + anthranilate + 2 NAD(+) = 2-(4-dimethylaminophenyl)diazenylbenzoate + 2 NADH + 2 H(+). Its function is as follows. Quinone reductase that provides resistance to thiol-specific stress caused by electrophilic quinones. Also exhibits azoreductase activity. Catalyzes the reductive cleavage of the azo bond in aromatic azo compounds to the corresponding amines. This Cereibacter sphaeroides (strain KD131 / KCTC 12085) (Rhodobacter sphaeroides) protein is FMN-dependent NADH:quinone oxidoreductase.